Consider the following 724-residue polypeptide: WW domain-containing protein ZK1098.1 (724 aa).

WW domains are found at residues 78–111 and 123–156; these read PSVE…KPDV and QPQQ…KPDG. 6 FF domains span residues 224–282, 295–349, 353–422, 442–502, 507–562, and 578–632; these read KKRQ…WKVQ, IKKS…CIDF, RDKE…HIKQ, QRKV…FVED, YTED…LIEK, and KRRL…YKNG. The tract at residues 626–724 is disordered; it reads FNHYKNGTSG…KRKRRESEAD (99 aa). A compositionally biased stretch (polar residues) spans 630-639; it reads KNGTSGTTAG. The span at 645–657 shows a compositional bias: basic residues; it reads KKKKKKDKKKKNK. Over residues 681–692 the composition is skewed to basic and acidic residues; the sequence is SKEDRMDDEERG. Positions 693-703 are enriched in basic residues; sequence KKSKKSRKRSP.

In Caenorhabditis elegans, this protein is WW domain-containing protein ZK1098.1.